The sequence spans 180 residues: Ribulose bisphosphate carboxylase small subunit, chloroplastic 3 (180 aa).

The transit peptide at 1–56 (MASSVMSSAAVATRGNGAQASMVAPFTGLKSTASFPVSRKQNLDITSIASNGGRVS) directs the protein to the chloroplast.

The protein belongs to the RuBisCO small chain family. Heterohexadecamer of 8 large and 8 small subunits. As to quaternary structure, (Microbial infection) Binds to tobamovirus movement protein; this interaction seems required for viral systemic movement.

It is found in the plastid. Its subcellular location is the chloroplast. It localises to the cell junction. The protein resides in the plasmodesma. Functionally, ruBisCO catalyzes two reactions: the carboxylation of D-ribulose 1,5-bisphosphate, the primary event in carbon dioxide fixation, as well as the oxidative fragmentation of the pentose substrate. Both reactions occur simultaneously and in competition at the same active site. Although the small subunit is not catalytic it is essential for maximal activity. Involved in antiviral defenses. This is Ribulose bisphosphate carboxylase small subunit, chloroplastic 3 from Solanum lycopersicum (Tomato).